The primary structure comprises 292 residues: tRNA pseudouridine synthase B (292 aa).

D40 functions as the Nucleophile in the catalytic mechanism.

The protein belongs to the pseudouridine synthase TruB family. Type 1 subfamily.

The enzyme catalyses uridine(55) in tRNA = pseudouridine(55) in tRNA. Its function is as follows. Responsible for synthesis of pseudouridine from uracil-55 in the psi GC loop of transfer RNAs. This is tRNA pseudouridine synthase B from Mycoplasma mycoides subsp. mycoides SC (strain CCUG 32753 / NCTC 10114 / PG1).